The sequence spans 750 residues: Dual specificity tyrosine-phosphorylation-regulated kinase 1A (750 aa).

Disordered stretches follow at residues 56–81 (ALPY…RDPA) and 104–129 (YAKK…KVYN). The Bipartite nuclear localization signal motif lies at 109–126 (RRHQQGQGDDSSHKKERK). The region spanning 151–471 (YEIDSLIGKG…PYYALQHSFF (321 aa)) is the Protein kinase domain. ATP contacts are provided by residues 157-165 (IGKGSFGQV), K180, and 230-233 (FEML). The active-site Proton acceptor is the D279. Disordered stretches follow at residues 400–434 (TKDG…AGES), 477–531 (EGTN…RHSG), 583–666 (SQKN…GNQA), and 731–750 (DRED…VASS). The span at 477–493 (EGTNTSNSVSTSPAMEQ) shows a compositional bias: polar residues. Residues 494 to 517 (SQSSGTTSSTSSSSGGSSGTSNSG) are compositionally biased toward low complexity. The tract at residues 584 to 612 (QKNVPHHHGNGSHHHHHHHHHHHGQHILS) is histidine-rich domain (HRD). Over residues 587-608 (VPHHHGNGSHHHHHHHHHHHGQ) the composition is skewed to basic residues. Residues 610–621 (ILSNRTRTRIYN) are compositionally biased toward polar residues. Positions 622 to 659 (SPSTSSSTQDSMDIGNSHHSMTSLSSSTTSSSTSSSST) are enriched in low complexity. Polar residues predominate over residues 741 to 750 (CVQQSPVASS).

The protein belongs to the protein kinase superfamily. CMGC Ser/Thr protein kinase family. MNB/DYRK subfamily. Post-translationally, autophosphorylated on tyrosine residues.

It is found in the nucleus. Its subcellular location is the nucleus speckle. It catalyses the reaction L-seryl-[protein] + ATP = O-phospho-L-seryl-[protein] + ADP + H(+). The catalysed reaction is L-threonyl-[protein] + ATP = O-phospho-L-threonyl-[protein] + ADP + H(+). It carries out the reaction L-tyrosyl-[protein] + ATP = O-phospho-L-tyrosyl-[protein] + ADP + H(+). The enzyme catalyses [DNA-directed RNA polymerase] + ATP = phospho-[DNA-directed RNA polymerase] + ADP + H(+). Functionally, dual-specificity kinase which possesses both serine/threonine and tyrosine kinase activities. Exhibits a substrate preference for proline at position P+1 and arginine at position P-3. Plays an important role in double-strand breaks (DSBs) repair following DNA damage. Mechanistically, phosphorylates RNF169 and increases its ability to block accumulation of TP53BP1 at the DSB sites thereby promoting homologous recombination repair (HRR). Also acts as a positive regulator of transcription by acting as a CTD kinase that mediates phosphorylation of the CTD (C-terminal domain) of the large subunit of RNA polymerase II (RNAP II) POLR2A. Modulates alternative splicing by phosphorylating the splice factor SRSF6. Phosphorylates SEPTIN4, SEPTIN5 and SF3B1. In Xenopus laevis (African clawed frog), this protein is Dual specificity tyrosine-phosphorylation-regulated kinase 1A.